A 73-amino-acid chain; its full sequence is DNA-directed RNA polymerase subunit omega (73 aa).

This sequence belongs to the RNA polymerase subunit omega family. As to quaternary structure, in cyanobacteria the RNAP catalytic core is composed of 2 alpha, 1 beta, 1 beta', 1 gamma and 1 omega subunit. When a sigma factor is associated with the core the holoenzyme is formed, which can initiate transcription.

It catalyses the reaction RNA(n) + a ribonucleoside 5'-triphosphate = RNA(n+1) + diphosphate. Promotes RNA polymerase assembly. Latches the N- and C-terminal regions of the beta' subunit thereby facilitating its interaction with the beta and alpha subunits. This is DNA-directed RNA polymerase subunit omega from Gloeobacter violaceus (strain ATCC 29082 / PCC 7421).